The following is a 373-amino-acid chain: MGKWRAVAALLLRNQLLNSSKRLNLSSSPCVSKHPTIGLASRFLNFRHFSAFPSPISIYNNDSDSGSNDAYQNYEFGTEAEEALGKIPIKAYFLSTSIDLKAMQAENLCNVVPPTSRSTNYIALKFSDFTPSGIYSLDERESVSNCKFMVVFQYGSAILFNVDDNDVDRYLDIVRRHASGLLTEMRKDDYAVKEKPLLIEEMKGGPDYIVLKTLDTNSIRIIGSVLGQSIALDYSVSQVNKLVEEFADINRSMAKTGTFTMTRKKLFQLVGKANSNIADVILKVGLFERSEIAWREARYAQIYEYLREEYEISQRFGDLDYKLKFIEHNIHFLQEVMQNRQSDLLEWCIIFLLAIENAIGIYEIVRESAGASL.

A mitochondrion-targeting transit peptide spans 1-49; the sequence is MGKWRAVAALLLRNQLLNSSKRLNLSSSPCVSKHPTIGLASRFLNFRHF. The chain crosses the membrane as a helical span at residues 346–362; the sequence is EWCIIFLLAIENAIGIY.

This sequence belongs to the RMD1/sif2 family. In terms of tissue distribution, predominantly expressed in the root meristem, in the primary and lateral root tips. Also present in leaves and pollen.

Its subcellular location is the mitochondrion membrane. The protein localises to the mitochondrion. Its function is as follows. Required for the maintenance of mitochondrial structure. Positive regulator of cell division and endoreduplication but negative regulator of cell expansion in the postembryonic root meristem, thus leading to the promotion of root growth. The polypeptide is Protein RETARDED ROOT GROWTH, mitochondrial (Arabidopsis thaliana (Mouse-ear cress)).